The following is a 156-amino-acid chain: MRTLRILAVGRIRTPFWQQAATHYMERIRHNCRLTETVVKDGGAALPPTARNADEGARLIAAMGPTDIVVCLDEHGRNMTSRDFAGFIERLTENATRTPCFVIGGAFGLDKSVLQRAEHKLALGPMTFPHEMARVVLLEQLYRADAILRGAPYHHD.

S-adenosyl-L-methionine contacts are provided by residues Leu72, Gly104, and 123–128 (LGPMTF).

It belongs to the RNA methyltransferase RlmH family. Homodimer.

The protein resides in the cytoplasm. It carries out the reaction pseudouridine(1915) in 23S rRNA + S-adenosyl-L-methionine = N(3)-methylpseudouridine(1915) in 23S rRNA + S-adenosyl-L-homocysteine + H(+). Its function is as follows. Specifically methylates the pseudouridine at position 1915 (m3Psi1915) in 23S rRNA. This is Ribosomal RNA large subunit methyltransferase H from Nitratidesulfovibrio vulgaris (strain ATCC 29579 / DSM 644 / CCUG 34227 / NCIMB 8303 / VKM B-1760 / Hildenborough) (Desulfovibrio vulgaris).